A 401-amino-acid chain; its full sequence is Pleckstrin homology-like domain family A member 1 (401 aa).

Disordered regions lie at residues 39–67 (IQKRREGARPVPFSERSQEDGRGPAARSS), 190–222 (QQQQQQQQQQQQQQQPGQGPAEPSQPSGPAVAS), and 293–401 (KSTR…SNSA). Residues 151-283 (LKEGVLEKRS…AEITLQMVQY (133 aa)) form the PH domain. A compositionally biased stretch (low complexity) spans 190–204 (QQQQQQQQQQQQQQQ). Positions 308–344 (PSQPQPQPQLQPQPQPQPQPQPQPQSQPQPQPQPKPQ) are enriched in pro residues. The segment at 311–346 (PQPQPQLQPQPQPQPQPQPQPQSQPQPQPQPKPQPQ) is 15 X 2 AA repeats of P-Q. Residues 352 to 378 (PHPHPHPHSHPHSHPHPHPHPHPHQIP) are compositionally biased toward basic residues. The tract at residues 352–389 (PHPHPHPHSHPHSHPHPHPHPHPHQIPHPHPQPHSQPH) is 14 X 2 AA repeats of P-H.

In terms of assembly, interacts with RPL14, EIF3S7 and PABPC4. Widely expressed with highest levels in pancreas. Strongly expressed by benign melanocytic nevi, and progressively reduced expressed in primary and metastatic melanomas (at protein level).

The protein localises to the cytoplasm. It localises to the cytoplasmic vesicle. It is found in the nucleus. The protein resides in the nucleolus. Seems to be involved in regulation of apoptosis. May be involved in detachment-mediated programmed cell death. May mediate apoptosis during neuronal development. May be involved in regulation of anti-apoptotic effects of IGF1. May be involved in translational regulation. In Homo sapiens (Human), this protein is Pleckstrin homology-like domain family A member 1 (PHLDA1).